A 395-amino-acid chain; its full sequence is Elongation factor Tu (395 aa).

Positions 10-204 constitute a tr-type G domain; the sequence is KPHVNIGTIG…EVDAYIPTPE (195 aa). Residues 19–26 form a G1 region; sequence GHVDHGKT. Residue 19–26 coordinates GTP; it reads GHVDHGKT. T26 provides a ligand contact to Mg(2+). Residues 60-64 are G2; sequence GITIS. The interval 81-84 is G3; sequence DCPG. Residues 81-85 and 136-139 each bind GTP; these read DCPGH and NKCD. The interval 136–139 is G4; the sequence is NKCD. The interval 174–176 is G5; sequence SAL.

The protein belongs to the TRAFAC class translation factor GTPase superfamily. Classic translation factor GTPase family. EF-Tu/EF-1A subfamily. Monomer.

It localises to the cytoplasm. The catalysed reaction is GTP + H2O = GDP + phosphate + H(+). Its function is as follows. GTP hydrolase that promotes the GTP-dependent binding of aminoacyl-tRNA to the A-site of ribosomes during protein biosynthesis. The protein is Elongation factor Tu of Bacillus cereus (strain G9842).